The following is a 395-amino-acid chain: MEMAESIPCNSVVGGNFKEVSPEKVIRFKPPLYKQRYQFVRDLVDRHEPKKVADLGCGDAKLLKLLKIYPCIQLLVGVDINEEKLHSNGHRLSPYLGEFVKPRDLDLTVTLYHGSVVERDSRLLGFDLITCIELIEHLDSDDLARFPDVVFGYLSPAMVVISTPNAEFNPLFPTVTLRDADHKFEWSRMEFQTWALHVANCYNYRVEFTGVGTPPAGSEHVGYCTQIGVFTKNGGKLSKPSVSQQCDQHVYKPVYTTSYPSLQQEKVLKFVLVGELLIQVDRLRLRYQRMLRDREKDRGPKPGDMDSCPAPHLLLGAVFTEAEKARIESSPKPFCEGEKFYIPLQRLLTYPKLHRLCADEDRVRSLIADSVCLSSDGSAVVVDLHNSWDYRPEEN.

S-adenosyl-L-methionine is bound by residues Asp79 and Ser115. Mg(2+) is bound by residues Glu133, Glu136, His137, and His182.

It belongs to the methyltransferase superfamily. HEN1 family. The cofactor is Mg(2+). In terms of tissue distribution, specifically expressed in testis.

Its subcellular location is the cytoplasm. The enzyme catalyses small RNA 3'-end nucleotide + S-adenosyl-L-methionine = small RNA 3'-end 2'-O-methylnucleotide + S-adenosyl-L-homocysteine + H(+). In terms of biological role, methyltransferase that adds a 2'-O-methyl group at the 3'-end of piRNAs, a class of 24 to 30 nucleotide RNAs that are generated by a Dicer-independent mechanism and are primarily derived from transposons and other repeated sequence elements. This probably protects the 3'-end of piRNAs from uridylation activity and subsequent degradation. Stabilization of piRNAs is essential for gametogenesis. In Mus musculus (Mouse), this protein is Small RNA 2'-O-methyltransferase (Henmt1).